Here is a 338-residue protein sequence, read N- to C-terminus: Envelope glycoprotein K (338 aa).

The signal sequence occupies residues 1-30; that stretch reads MLAVRSLQHLTTVIFITAYGLVLAWYIVFG. Topologically, residues 31–121 are extracellular; that stretch reads ASPLHRCIYA…VNCLEALWDT (91 aa). Residues 31 to 121 form an involved in fusion region; it reads ASPLHRCIYA…VNCLEALWDT (91 aa). N-linked (GlcNAc...) asparagine; by host glycans are attached at residues Asn48 and Asn58. A helical transmembrane segment spans residues 122–140; it reads QMRLVVVGWFLYLAFVALH. Residues 141–212 lie on the Cytoplasmic side of the membrane; sequence QRRCMFGVVS…DPVTFLYHRP (72 aa). Residues 213–233 form a helical membrane-spanning segment; sequence AIGVIVGCELLLRFVALGLIV. The Extracellular segment spans residues 234-243; the sequence is GTALISRGAC. A helical transmembrane segment spans residues 244–264; that stretch reads AITHPLFLTITTWCFVSIIAL. Topologically, residues 265–301 are cytoplasmic; the sequence is TELYFILRRGSAPKNAEPAAPRGRSKGWSGVCGRCCS. The interaction with UL20 stretch occupies residues 265 to 301; sequence TELYFILRRGSAPKNAEPAAPRGRSKGWSGVCGRCCS. Residues 302-322 form a helical membrane-spanning segment; it reads IILSGIAVRLCYIAVVAGVVL. Residues 323–338 lie on the Extracellular side of the membrane; sequence VALRYEQEIQRRLFDL.

Belongs to the alphaherpesvirinae glycoprotein K family. Interacts (via UL20 interaction region) with protein UL20 (via N-terminus); this interaction probably plays a role in the coordinate transport of protein UL20 and gK to the trans-Golgi network (TGN), and is required for the cell surface expression of gK. In terms of processing, N-glycosylated.

The protein resides in the host cell membrane. Its subcellular location is the host endosome membrane. It is found in the host Golgi apparatus membrane. In terms of biological role, glycoprotein that probably modulates membrane fusion events during secondary envelopment of cytoplasmic capsids that bud into specific trans-Golgi network (TGN)-derived membranes. Also plays a role, together with gB, in virus-induced cell-to-cell fusion (syncytia formation). Seems to block fusion of virions with infected-cell membranes. The protein is Envelope glycoprotein K (gK) of Human herpesvirus 2 (strain HG52) (HHV-2).